A 344-amino-acid polypeptide reads, in one-letter code: Dihydroorotase (344 aa).

Zn(2+) is bound by residues His14 and His16. Residues 16–18 (HVR) and Asn42 each bind substrate. Positions 99, 136, and 174 each coordinate Zn(2+). N6-carboxylysine is present on Lys99. His136 lines the substrate pocket. Residue Leu219 participates in substrate binding. Residue Asp247 coordinates Zn(2+). Asp247 is an active-site residue. Substrate contacts are provided by His251 and Ala263.

Belongs to the metallo-dependent hydrolases superfamily. DHOase family. Class II DHOase subfamily. Homodimer. Zn(2+) is required as a cofactor.

The enzyme catalyses (S)-dihydroorotate + H2O = N-carbamoyl-L-aspartate + H(+). It functions in the pathway pyrimidine metabolism; UMP biosynthesis via de novo pathway; (S)-dihydroorotate from bicarbonate: step 3/3. Catalyzes the reversible cyclization of carbamoyl aspartate to dihydroorotate. This chain is Dihydroorotase, found in Leptothrix cholodnii (strain ATCC 51168 / LMG 8142 / SP-6) (Leptothrix discophora (strain SP-6)).